The sequence spans 849 residues: Villin-1 (849 aa).

Gelsolin-like repeat units follow at residues 30 to 107 (IEKS…DKFL), 147 to 213 (RVTE…EDGK), 262 to 335 (VPVE…TVEF), 405 to 475 (QEQL…PEMF), and 527 to 566 (AIQVDLAASSLNSSHCYILQAGGSFFTWLGSLSSPSDHNL). Residues 739 to 849 (ETPERSLRKS…AVATGTPRRR (111 aa)) form a disordered region. Composition is skewed to low complexity over residues 747–782 (KSSSSSLPRRSPGTSSSEPTTPEQRAAARTFASAST) and 791–823 (PAALSPSLSTPSPSPRSRSSASSSPASWNSTPS).

It belongs to the villin/gelsolin family. In terms of tissue distribution, expressed in roots, young leaves, and inflorescences, mostly in the vasculature of roots, leaves, and filaments of the anthers. Also detected in guard cells.

The protein localises to the cytoplasm. It is found in the cytoskeleton. Its function is as follows. Ca(2+)-independent actin-binding protein. Binds actin microfilaments (MFs). Involved in actin filament bundling, severing and capping. Caps the barbed end of actin filaments and protects them from disassembly. Promotes VLN3-mediated MF severing. The polypeptide is Villin-1 (Oryza sativa subsp. japonica (Rice)).